The sequence spans 184 residues: dCTP deaminase (184 aa).

DCTP is bound by residues 107 to 112 (KSTYAR), 131 to 133 (TLE), Gln-152, Tyr-166, and Gln-176. The active-site Proton donor/acceptor is the Glu-133.

The protein belongs to the dCTP deaminase family. Homotrimer.

The catalysed reaction is dCTP + H2O + H(+) = dUTP + NH4(+). Its pathway is pyrimidine metabolism; dUMP biosynthesis; dUMP from dCTP (dUTP route): step 1/2. Functionally, catalyzes the deamination of dCTP to dUTP. This chain is dCTP deaminase, found in Rhodospirillum centenum (strain ATCC 51521 / SW).